The sequence spans 374 residues: Tomoregulin-2 (374 aa).

A signal peptide spans 1–39 (MVLWESPRQCSSWTLCEGFCWLLLLPVMLLIVARPVKLA). Residues 40 to 320 (AFPTSLSDCQ…VPGPVRFQYV (281 aa)) lie on the Extracellular side of the membrane. Residue N55 is glycosylated (N-linked (GlcNAc...) asparagine). Kazal-like domains follow at residues 90–137 (VCQF…SCAT) and 181–229 (VCNI…RCQD). Cystine bridges form between C91/C121, C95/C114, C103/C135, C182/C213, C186/C206, C195/C227, C265/C278, C273/C289, and C291/C300. Residues 261-301 (HHIPCPEHYNGFCMHGKCEHSINMQEPSCRCDAGYTGQHCE) form the EGF-like domain. The tract at residues 303-320 (KDYSVLYVVPGPVRFQYV) is required for shedding. Residues 321-341 (LIAAVIGTIQIAVICVVVLCI) form a helical membrane-spanning segment. Residues 342–374 (TRKCPRSNRIHRQKQNTGHYSSDNTTRASTRLI) lie on the Cytoplasmic side of the membrane. The segment at 353–374 (RQKQNTGHYSSDNTTRASTRLI) is disordered. Polar residues predominate over residues 356–374 (QNTGHYSSDNTTRASTRLI).

The protein belongs to the tomoregulin family. In terms of processing, O-glycosylated; contains chondroitin sulfate glycosaminoglycans. A soluble form (TMEFF2-ECD) is produced by proteolytic shedding. This shedding can be induced by phorbol ester or pro-inflammatory cytokines such as TNFalpha, and is mediated by a metalloproteinase ADAM.

Its subcellular location is the membrane. Functionally, may be a survival factor for hippocampal and mesencephalic neurons. The shedded form may up-regulate cell proliferation. The polypeptide is Tomoregulin-2 (TMEFF2) (Bos taurus (Bovine)).